Consider the following 438-residue polypeptide: Serine hydroxymethyltransferase (438 aa).

(6S)-5,6,7,8-tetrahydrofolate contacts are provided by residues Leu-133 and 137–139; that span reads GHL. Lys-242 carries the post-translational modification N6-(pyridoxal phosphate)lysine.

Belongs to the SHMT family. As to quaternary structure, homodimer. Pyridoxal 5'-phosphate serves as cofactor.

The protein localises to the cytoplasm. The catalysed reaction is (6R)-5,10-methylene-5,6,7,8-tetrahydrofolate + glycine + H2O = (6S)-5,6,7,8-tetrahydrofolate + L-serine. It participates in one-carbon metabolism; tetrahydrofolate interconversion. Its pathway is amino-acid biosynthesis; glycine biosynthesis; glycine from L-serine: step 1/1. Its function is as follows. Catalyzes the reversible interconversion of serine and glycine with tetrahydrofolate (THF) serving as the one-carbon carrier. This reaction serves as the major source of one-carbon groups required for the biosynthesis of purines, thymidylate, methionine, and other important biomolecules. Also exhibits THF-independent aldolase activity toward beta-hydroxyamino acids, producing glycine and aldehydes, via a retro-aldol mechanism. The chain is Serine hydroxymethyltransferase from Brucella canis (strain ATCC 23365 / NCTC 10854 / RM-666).